Reading from the N-terminus, the 194-residue chain is Small ribosomal subunit protein eS7 (194 aa).

It belongs to the eukaryotic ribosomal protein eS7 family.

The chain is Small ribosomal subunit protein eS7 (RpS7) from Drosophila yakuba (Fruit fly).